The following is a 467-amino-acid chain: Glutamate--tRNA ligase (467 aa).

The 'HIGH' region motif lies at Pro-9–Gly-19. A 'KMSKS' region motif is present at residues Lys-250 to Arg-254. Lys-253 contacts ATP.

This sequence belongs to the class-I aminoacyl-tRNA synthetase family. Glutamate--tRNA ligase type 1 subfamily. In terms of assembly, monomer.

The protein resides in the cytoplasm. The enzyme catalyses tRNA(Glu) + L-glutamate + ATP = L-glutamyl-tRNA(Glu) + AMP + diphosphate. Its function is as follows. Catalyzes the attachment of glutamate to tRNA(Glu) in a two-step reaction: glutamate is first activated by ATP to form Glu-AMP and then transferred to the acceptor end of tRNA(Glu). The sequence is that of Glutamate--tRNA ligase from Mesomycoplasma hyopneumoniae (strain J / ATCC 25934 / NCTC 10110) (Mycoplasma hyopneumoniae).